A 130-amino-acid chain; its full sequence is Protein ApaG (130 aa).

One can recognise an ApaG domain in the interval 3–127 (SQTTRDIEVT…FSLDSPHEKP (125 aa)).

The protein is Protein ApaG of Paramagnetospirillum magneticum (strain ATCC 700264 / AMB-1) (Magnetospirillum magneticum).